Reading from the N-terminus, the 502-residue chain is Keratin, type II microfibrillar, component 5 (502 aa).

S1 carries the post-translational modification Blocked amino end (Ser). The head stretch occupies residues 1-122 (SCRSYRISPG…PNAQCVKHQE (122 aa)). In terms of domain architecture, IF rod spans 122–433 (EKEQIKNLNS…RLLEGEEQRL (312 aa)). The tract at residues 123-157 (KEQIKNLNSRFAAFIDKVRFLEQQNKLLETKWQFY) is coil 1A. Residues 158–167 (QNQRCCESNL) are linker 1. The interval 168-268 (EPLFNGYIET…YDEEIQILNA (101 aa)) is coil 1B. K228 is covalently cross-linked (Glycyl lysine isopeptide (Lys-Gly) (interchain with G-Cter in SUMO1)). Positions 269 to 285 (HISDTSVIVKMDNSRDL) are linker 12. The interval 286–429 (NMDCVVAEIK…ATYRRLLEGE (144 aa)) is coil 2. Residues 430–502 (EQRLCEGVGS…CGSSRSVRFA (73 aa)) form a tail region.

This sequence belongs to the intermediate filament family. Hard keratin wool.

Wool microfibrillar keratin. The protein is Keratin, type II microfibrillar, component 5 of Ovis aries (Sheep).